A 2567-amino-acid chain; its full sequence is Highly reducing polyketide synthase sor1 (2567 aa).

In terms of domain architecture, Ketosynthase family 3 (KS3) spans 14-436 (SEPIAIIGMS…GANAHIILED (423 aa)). Active-site for beta-ketoacyl synthase activity residues include C187, H322, and H359. The malonyl-CoA:ACP transacylase (MAT) domain stretch occupies residues 550–841 (VFTGQGAQWW…VVEVGPHTAL (292 aa)). Positions 939–1079 (HHLLGSLVEG…GLISIEFEAS (141 aa)) are N-terminal hotdog fold. Residues 939-1249 (HHLLGSLVEG…GFSYQSLGRS (311 aa)) are dehydratase (DH) domain. One can recognise a PKS/mFAS DH domain in the interval 939–1252 (HHLLGSLVEG…YQSLGRSVSL (314 aa)). Residue H971 is the Proton acceptor; for dehydratase activity of the active site. Residues 1095–1252 (YKRQIPPAQL…YQSLGRSVSL (158 aa)) are C-terminal hotdog fold. D1161 acts as the Proton donor; for dehydratase activity in catalysis. The interval 1426 to 1534 (LEIGASTGGI…RSLLKPGGTL (109 aa)) is methyltransferase (CMet) domain. An enoyl reductase (ER) domain region spans residues 1852 to 2163 (FLPELLVFGD…TEEETGKRVL (312 aa)). The ketoreductase (KR) domain stretch occupies residues 2187-2369 (ASYLIVGGNG…AVSIDLSLVD (183 aa)). The 78-residue stretch at 2481 to 2558 (EAISVVGSAV…QLVANVVDRS (78 aa)) folds into the Carrier domain. An O-(pantetheine 4'-phosphoryl)serine modification is found at S2518.

It functions in the pathway secondary metabolite biosynthesis. Functionally, highly reducing polyketide synthase; part of the SOR gene cluster that mediates the biosynthesis of sorbicillinoids, a diverse group of yellow secondary metabolites that restrict growth of competing pathogenic fungi but not of bacteria. Sorbicillinoids biosynthesis requires the action of two PKSs. The SOR cluster is required for the production of trichodimerol and dihydrotrichotetronin, with sor2 being sufficient for production of trichodimerol, but not dihydrotrichotetronin in the light. Sor1 iteratively combines three acetyl units and the growing chain is modified by the ketoacyl reductase subunit, and optional by the enoyl reductase subunit in the second cycle. The polyketide is then handed over to the PKS sor2, which adds three more acetyl units, and two methyl groups. Sor2 releases an aldehyde, which undergoes spontaneous cyclization resulting in the formation of sorbicillin or 2',3'-dihydrosorbicillin. The monooxygenase sor5 oxidizes sorbicillin and 2',3'-dihydrosorbicillin to 2',3'-dihydrosorbicillinol and sorbicillinol, respectively. The oxidoreductase sor8 further converts sorbicillinol into oxosorbicillinol. Sorbicillinol is the building block for the other sorbicillinoids such as disorbicillinol, bisvertinolon, dihydrobisvertinolone, and dihydrotrichotetronine. The sequence is that of Highly reducing polyketide synthase sor1 from Hypocrea jecorina (strain QM6a) (Trichoderma reesei).